The following is a 388-amino-acid chain: MAMVKRNNNTGMIPVSTKQLLALGAAAGATALQGFVKNNGMAIVEGAVDLTKRAYKAVRRRGGKKQQMINHVGGTGGAIMAPVAVTRQLVGSKPKFTGRTSGSVTVTHREYLSQVNNSTGFQVNGGIVGNLLQLNPLNGTLFSWLPAIASNFDQYTFNSVVLHYVPLCSTTEVGRVAIYFDKDSEDPEPADRVELANYSVLKETAPWAEAMLRVPTDKIKRFCDDSSTSDHKLIDLGQLGIATYGGAGTNAVGDIFISYSVTLYFPQPTNTLLSTRRLDLAGALVTASGPGYLLVSRTATVLTMTFRATGTFVISGTYRCLTATTLGLAGGVNVNSITVVDNIGTDSAFFINCTVSNLPSVVTFTSTGITSATVHCVRATRQNDVSLI.

The interval 1 to 102 is r domain, interaction with RNA; that stretch reads MAMVKRNNNT…KPKFTGRTSG (102 aa). The interval 56–61 is involved in encapsidation; the sequence is KAVRRR. The tract at residues 103–264 is s domain, virion shell; it reads SVTVTHREYL…IFISYSVTLY (162 aa). The p domain, projecting stretch occupies residues 265-388; it reads FPQPTNTLLS…ATRQNDVSLI (124 aa).

It belongs to the icosahedral plant coat protein family. In terms of assembly, homomultimer.

It is found in the virion. Capsid protein self-assembles to form an icosahedral capsid with a T=3 symmetry, about 32-35 nm in diameter, and consisting of 180 capsid proteins. The protein is Capsid protein of Tomato bushy stunt virus (strain Cherry) (TBSV).